Reading from the N-terminus, the 397-residue chain is MLKGMTRLVSRVHKLDPGRFSHLGTQAPQCPVAHLDNQVPTERTRAISRTLENDPAKHGEQHVGQHYNISIQELKTVFPHGLPPRFVMQVKTFNEACLMVRKPALELLHYLKNTNFAHPAVRYVLYGEKGTGKTLSLCHIIHFCAKQDWLILHIPDAHLWVKNCRDLLQSTYNKQRFDQPLEASIWLKNFKTANERFLSQIKVQDKYVWNKRESTEKGSPLAEVVEQGIMRVRNATDAVGIVLKELKRQSSLGVFRLLVAVDGVNALWGRTTLKREDKSPITPEELALIYNLRKMVKNDWQGGAIVLTVSQTGSLFKPRKAYLPQELLGKEGFDTLDPFIPILVSNYNPKEFEGCIQYYLENNWLQHEKAHTEEGKKELLFLSNRNPGLLERLCAYL.

The transit peptide at Met1–Pro17 directs the protein to the mitochondrion. N6-acetyllysine occurs at positions 174 and 206.

Belongs to the mitochondrion-specific ribosomal protein mS29 family. In terms of assembly, component of the mitochondrial ribosome small subunit (28S) which comprises a 12S rRNA and about 30 distinct proteins. Interacts with DELE1. Interacts with NOA1.

The protein resides in the mitochondrion. It carries out the reaction GTP + H2O = GDP + phosphate + H(+). Its function is as follows. As a component of the mitochondrial small ribosomal subunit, it plays a role in the translation of mitochondrial mRNAs. Involved in mediating interferon-gamma-induced cell death. Displays GTPase activity in vitro. The sequence is that of Small ribosomal subunit protein mS29 from Bos taurus (Bovine).